A 168-amino-acid chain; its full sequence is MSLNLEDKKAVVAEIAAQVATAQTIVVAEYRGIEVSSMTKLRAKAREQGVYLRVLKNTLARRAVADTPFAGLADQMVGPLVYGISEDPVAAAKVLNDFAKVDNKIVIKAGSYDGKVLGTAEVAELASIPSRDELLSKLLFVMQAPVSGMARVLAAVAEKKGEGEAVAA.

The protein belongs to the universal ribosomal protein uL10 family. Part of the ribosomal stalk of the 50S ribosomal subunit. The N-terminus interacts with L11 and the large rRNA to form the base of the stalk. The C-terminus forms an elongated spine to which L12 dimers bind in a sequential fashion forming a multimeric L10(L12)X complex.

Functionally, forms part of the ribosomal stalk, playing a central role in the interaction of the ribosome with GTP-bound translation factors. This Laribacter hongkongensis (strain HLHK9) protein is Large ribosomal subunit protein uL10.